A 137-amino-acid polypeptide reads, in one-letter code: Small ribosomal subunit protein uS12 (137 aa).

The segment at 1–26 is disordered; sequence MPTINQLVTKGRKRKASKTKSPALNQ.

Belongs to the universal ribosomal protein uS12 family. As to quaternary structure, part of the 30S ribosomal subunit. Contacts proteins S8 and S17. May interact with IF1 in the 30S initiation complex.

With S4 and S5 plays an important role in translational accuracy. Functionally, interacts with and stabilizes bases of the 16S rRNA that are involved in tRNA selection in the A site and with the mRNA backbone. Located at the interface of the 30S and 50S subunits, it traverses the body of the 30S subunit contacting proteins on the other side and probably holding the rRNA structure together. The combined cluster of proteins S8, S12 and S17 appears to hold together the shoulder and platform of the 30S subunit. This is Small ribosomal subunit protein uS12 from Mycoplasmopsis pulmonis (strain UAB CTIP) (Mycoplasma pulmonis).